We begin with the raw amino-acid sequence, 140 residues long: Putative pre-16S rRNA nuclease (140 aa).

Belongs to the YqgF nuclease family.

It is found in the cytoplasm. Functionally, could be a nuclease involved in processing of the 5'-end of pre-16S rRNA. This is Putative pre-16S rRNA nuclease from Vibrio vulnificus (strain CMCP6).